A 169-amino-acid polypeptide reads, in one-letter code: Probable actin-related protein 2/3 complex subunit 4 (169 aa).

It belongs to the ARPC4 family. As to quaternary structure, component of the Arp2/3 complex, at least composed of arx-1, arx-2, arx-4 and arx-6.

The protein localises to the cytoplasm. Its subcellular location is the cytoskeleton. Functionally, functions as actin-binding component of the Arp2/3 complex which is involved in regulation of actin polymerization and together with an activating nucleation-promoting factor (NPF) mediates the formation of branched actin networks. Seems to contact the mother actin filament. Plays a role in time-dependent memory loss and the retention of conditioned behavior over time. This is Probable actin-related protein 2/3 complex subunit 4 from Caenorhabditis elegans.